A 335-amino-acid chain; its full sequence is Aliphatic sulfonates import ATP-binding protein SsuB (335 aa).

Residues 74–293 form the ABC transporter domain; the sequence is VRLTRVSKRY…ARASAAFAAL (220 aa). 106 to 113 contributes to the ATP binding site; that stretch reads GRSGCGKS. Residues 308–335 are disordered; sequence APAAPNAAGPEGASRGRAAPASGLRWAV.

This sequence belongs to the ABC transporter superfamily. Aliphatic sulfonates importer (TC 3.A.1.17.2) family. In terms of assembly, the complex is composed of two ATP-binding proteins (SsuB), two transmembrane proteins (SsuC) and a solute-binding protein (SsuA).

The protein resides in the cell inner membrane. The enzyme catalyses ATP + H2O + aliphatic sulfonate-[sulfonate-binding protein]Side 1 = ADP + phosphate + aliphatic sulfonateSide 2 + [sulfonate-binding protein]Side 1.. Part of the ABC transporter complex SsuABC involved in aliphatic sulfonates import. Responsible for energy coupling to the transport system. This Burkholderia mallei (strain ATCC 23344) protein is Aliphatic sulfonates import ATP-binding protein SsuB.